A 554-amino-acid polypeptide reads, in one-letter code: Protein translocase subunit SecD (554 aa).

6 consecutive transmembrane segments (helical) span residues 10 to 30, 392 to 412, 414 to 434, 435 to 455, 491 to 511, and 516 to 536; these read LVIL…MFYA, AGMV…IASY, LFGF…FAVM, GAIG…TIGT, AIID…VLGA, and GFAV…IWVV.

Belongs to the SecD/SecF family. SecD subfamily. As to quaternary structure, forms a complex with SecF. Part of the essential Sec protein translocation apparatus which comprises SecA, SecYEG and auxiliary proteins SecDF-YajC and YidC.

Its subcellular location is the cell inner membrane. Its function is as follows. Part of the Sec protein translocase complex. Interacts with the SecYEG preprotein conducting channel. SecDF uses the proton motive force (PMF) to complete protein translocation after the ATP-dependent function of SecA. The polypeptide is Protein translocase subunit SecD (Rhodobacter capsulatus (strain ATCC BAA-309 / NBRC 16581 / SB1003)).